The following is a 649-amino-acid chain: MMNQSQRMAPVGSDKELSDLLDFSMMFPLPVANGKGRPASLAGTQFAGSGLEDRPSSGSWGNSDQNSSSFDPSRTYSEGAHFSESHNSLPSSTFLGPGLGGKSSERSAYATFGRDTSVSALTQAGFLPGELGLSSPGPLSPSGVKSGSQYYPSYPSNPRRRAADSGLDTQSKKVRKVPPGLPSSVYPSSSGDSYGRDAAAYPSAKTPGSAYPSPFYVADGSLHPSAELWSPPSQAGFGPMLGDGSSPLPLAPGSSSVGSGTFGGLQQQERMSYQLHGSEVNGTLPAVSSFSAAPGTYGGASGHTPPVSGADSLMGTRGTTASSSGDALGKALASIYSPDHSSNNFSPSPSTPVGSPQGLPGTSQWPRAGAPSALSPTYDGGLHGLSKMEDRLDEAIHVLRSHAVGTASDLHGLLPGHGALTTSFPGPVPLGGRHAGLVGGGHPEDGLTSGTSLLHTHASLPSQASSLPDLSQRPPDSYGGLGRAGAPAGASEIKREEKDDEESTSVADAEEDKKDLKAPRTRTSPDEDEDDLLPPEQKAEREKERRVANNARERLRVRDINEAFKELGRMCQLHLSSEKPQTKLLILHQAVAVILSLEQQVRERNLNPKAACLKRREEEKVSGVVGDPQLALSAAHPGLGEAHNPPGHL.

Disordered stretches follow at residues 34–107 (GKGR…SERS), 127–206 (LPGE…SAKT), 222–267 (LHPS…GLQQ), 291–325 (SAAPGTYGGASGHTPPVSGADSLMGTRGTTASSSG), and 339–382 (DHSS…DGGL). 2 stretches are compositionally biased toward polar residues: residues 56-76 (SSGSWGNSDQNSSSFDPSRTY) and 85-94 (SHNSLPSSTF). Positions 127–143 (LPGELGLSSPGPLSPSG) are enriched in low complexity. Residues serine 135 and serine 140 each carry the phosphoserine modification. Residues 145 to 156 (KSGSQYYPSYPS) are compositionally biased toward polar residues. Positions 171 to 177 (SKKVRKV) match the Nuclear localization signal motif. 2 stretches are compositionally biased toward low complexity: residues 182-193 (PSSVYPSSSGDS) and 242-259 (GDGSSPLPLAPGSSSVGS). Over residues 339-352 (DHSSNNFSPSPSTP) the composition is skewed to low complexity. Threonine 351 is modified (phosphothreonine). Serine 355 is modified (phosphoserine). Omega-N-methylarginine is present on arginine 367. The residue at position 375 (serine 375) is a Phosphoserine. The tract at residues 385-420 (LSKMEDRLDEAIHVLRSHAVGTASDLHGLLPGHGAL) is leucine-zipper. The disordered stretch occupies residues 431–547 (GGRHAGLVGG…KAEREKERRV (117 aa)). Over residues 448 to 469 (TSGTSLLHTHASLPSQASSLPD) the composition is skewed to polar residues. Residue lysine 494 forms a Glycyl lysine isopeptide (Lys-Gly) (interchain with G-Cter in SUMO2) linkage. Serine 524 carries the post-translational modification Phosphoserine. Glutamate 529 is subject to Phosphothreonine. Basic and acidic residues predominate over residues 537–547 (QKAEREKERRV). One can recognise a bHLH domain in the interval 544-597 (ERRVANNARERLRVRDINEAFKELGRMCQLHLSSEKPQTKLLILHQAVAVILSL). Residue lysine 620 forms a Glycyl lysine isopeptide (Lys-Gly) (interchain with G-Cter in SUMO2) linkage.

Homodimer. Heterodimer; efficient DNA binding requires dimerization with another bHLH protein. Forms a heterodimer with TWIST1 and TWIST2. Forms a heterodimer with NEUROD1; the heterodimer is inhibited in presence of ID2, but not NR0B2, to E-box element. Forms a heterodimer with TCF15; the heterodimer binds E-box element. Forms a heterodimer with MYOG; heterodimerization enhances MYOG DNA-binding and transcriptional activities. Forms a heterodimer with ATOH8; repress transcription of TCF3 and TCF3-NEUROG3 dimer-induced transactivation of E box-dependent promoters. Component of a nuclear TAL-1 complex composed at least of CBFA2T3, LDB1, TAL1 and TCF3. Interacts with NEUROD2. Interacts with EP300. Interacts with PTF1A, TGFB1I1 and UBE2I. Interacts with BHLHA9. Interacts with ASB2; the interaction is mediated by SKP2 and targets TCF3 for Notch-induced proteasomal degradation. Interacts with transcription factor ASCL5/AmeloD. As to quaternary structure, interacts with RALGAPA1. Interacts with FIGLA. In terms of assembly, forms a heterodimer with ATOH7; required for ATOH7 DNA-binding. In terms of processing, phosphorylated following NGF stimulation. Post-translationally, undergoes Notch-induced ubiquitination and subsequent proteasomal degradation which is mediated by ASB1 or ASB2, the substrate-recognition components of probable ECS E3 ubiquitin-protein ligase complexes.

It is found in the nucleus. Transcriptional regulator. Involved in the initiation of neuronal differentiation and mesenchymal to epithelial transition. Heterodimers between TCF3 and tissue-specific basic helix-loop-helix (bHLH) proteins play major roles in determining tissue-specific cell fate during embryogenesis, like muscle or early B-cell differentiation. Together with TCF15, required for the mesenchymal to epithelial transition. Dimers bind DNA on E-box motifs: 5'-CANNTG-3'. Binds to the kappa-E2 site in the kappa immunoglobulin gene enhancer. Binds to IEB1 and IEB2, which are short DNA sequences in the insulin gene transcription control region. Its function is as follows. Facilitates ATOH7 binding to DNA at the consensus sequence 5'-CAGGTG-3', and positively regulates transcriptional activity. The polypeptide is Transcription factor E2-alpha (TCF3) (Mesocricetus auratus (Golden hamster)).